A 238-amino-acid chain; its full sequence is E3 ubiquitin-protein ligase ZNRF2 (238 aa).

The interval 1-137 is disordered; sequence MGAKQSGPAA…AGGGPGGPRL (137 aa). G2 carries N-myristoyl glycine lipidation. S20, S24, S75, S82, S107, S110, S141, S147, and S189 each carry phosphoserine. Residues 35 to 77 are compositionally biased toward low complexity; the sequence is GARAARFAAPVSGAQQPSASAGAAAAAAAAASAPAAPRSRSLG. An RING-type; atypical zinc finger spans residues 195 to 236; the sequence is CAICLEELQQGDTIARLPCLCIYHKGCIDEWFEVNRSCPEHP.

Interacts with UBE2N. Interacts with ZNRF1. Interacts (when phosphorylated) with YWHAE. Phosphorylated; leading to binding to YWHAE. Phosphorylated by MTOR at Ser-147 and dephosphorylated by PP6C. Ser-147 phosphorylation stimulates vesicle-to-cytosol translocation. In terms of tissue distribution, expressed primarily in the nervous system. Expression is more intense in the granular cell layer of hippocampus, Purkinje cell layer of the cerebellum and the granular cell layer of the olfactory bulb. Detected in sensory neurons but not expressed in sympatic or enteric neurons. Expressed in testis, adipose tissue, columnar epithelial cells of the gut.

It localises to the endosome membrane. The protein localises to the lysosome membrane. Its subcellular location is the presynaptic cell membrane. It is found in the cytoplasm. It carries out the reaction S-ubiquitinyl-[E2 ubiquitin-conjugating enzyme]-L-cysteine + [acceptor protein]-L-lysine = [E2 ubiquitin-conjugating enzyme]-L-cysteine + N(6)-ubiquitinyl-[acceptor protein]-L-lysine.. Its pathway is protein modification; protein ubiquitination. Its function is as follows. E3 ubiquitin-protein ligase that plays a role in the establishment and maintenance of neuronal transmission and plasticity. Ubiquitinates the Na(+)/K(+) ATPase alpha-1 subunit/ATP1A1 and thereby influences its endocytosis and/or degradation. Also acts as a positive regulator of mTORC1 activation by amino acids, which functions upstream of the V-ATPase and of Rag-GTPases. In turn, phosphorylation by mTOR leads to its inhibition via targeting to the cytosol allowing a self-regulating feedback mechanism. The polypeptide is E3 ubiquitin-protein ligase ZNRF2 (Znrf2) (Mus musculus (Mouse)).